The sequence spans 180 residues: Insulin-like growth factor 2 (180 aa).

The first 24 residues, Met-1 to Ala-24, serve as a signal peptide directing secretion. The tract at residues Ala-25–Phe-52 is b. 3 disulfide bridges follow: Cys-33–Cys-71, Cys-45–Cys-84, and Cys-70–Cys-75. The tract at residues Ser-53 to Arg-64 is c. The a stretch occupies residues Gly-65–Ala-85. The d stretch occupies residues Thr-86–Glu-91. A propeptide spans Arg-92–Gln-180 (e peptide). A disordered region spans residues Pro-157 to Gln-180.

This sequence belongs to the insulin family. As to quaternary structure, interacts with MYORG; this interaction is required for IGF2 secretion. Interacts with integrins ITGAV:ITGB3 and ITGA6:ITGB4; integrin-binding is required for IGF2 signaling. Interacts with IGFBP2. Post-translationally, proteolytically processed by PCSK4, proIGF2 is cleaved at Arg-128 and Arg-92 to generate big-IGF2 and mature IGF2. As to expression, expressed in the heart, blood serum, kidney and skeletal muscle including the tibialis anterior muscle.

It localises to the secreted. The insulin-like growth factors possess growth-promoting activity. Major fetal growth hormone in mammals. Plays a key role in regulating fetoplacental development. IGF2 is influenced by placental lactogen. Also involved in tissue differentiation. In adults, involved in glucose metabolism in adipose tissue, skeletal muscle and liver. Acts as a ligand for integrin which is required for IGF2 signaling. Positively regulates myogenic transcription factor MYOD1 function by facilitating the recruitment of transcriptional coactivators, thereby controlling muscle terminal differentiation. Inhibits myoblast differentiation and modulates metabolism via increasing the mitochondrial respiration rate. Functionally, preptin undergoes glucose-mediated co-secretion with insulin, and acts as a physiological amplifier of glucose-mediated insulin secretion. Exhibits osteogenic properties by increasing osteoblast mitogenic activity through phosphoactivation of MAPK1 and MAPK3. The polypeptide is Insulin-like growth factor 2 (Mus musculus (Mouse)).